The chain runs to 108 residues: Protein RnfH (108 aa).

It belongs to the UPF0125 (RnfH) family.

In Laribacter hongkongensis (strain HLHK9), this protein is Protein RnfH.